The primary structure comprises 432 residues: Adenylosuccinate synthetase (432 aa).

GTP-binding positions include 13 to 19 and 41 to 43; these read GDEGKGK and GHT. The active-site Proton acceptor is the aspartate 14. Aspartate 14 and glycine 41 together coordinate Mg(2+). IMP is bound by residues 14 to 17, 39 to 42, threonine 131, arginine 145, glutamine 226, threonine 241, and arginine 305; these read DEGK and NAGH. Histidine 42 functions as the Proton donor in the catalytic mechanism. 301-307 contributes to the substrate binding site; it reads SVTGRAR. GTP is bound by residues arginine 307, 333 to 335, and 416 to 418; these read KLD and STG.

Belongs to the adenylosuccinate synthetase family. Homodimer. Mg(2+) serves as cofactor.

It is found in the cytoplasm. The catalysed reaction is IMP + L-aspartate + GTP = N(6)-(1,2-dicarboxyethyl)-AMP + GDP + phosphate + 2 H(+). The protein operates within purine metabolism; AMP biosynthesis via de novo pathway; AMP from IMP: step 1/2. In terms of biological role, plays an important role in the de novo pathway of purine nucleotide biosynthesis. Catalyzes the first committed step in the biosynthesis of AMP from IMP. The sequence is that of Adenylosuccinate synthetase from Neisseria meningitidis serogroup B (strain ATCC BAA-335 / MC58).